We begin with the raw amino-acid sequence, 226 residues long: MTNTEKRAVILLSGGLDSATVVAMARAEGYACYTMSFDYGQRHRAELDAAARVARDLGAVEHKVIGLNLSGIGGSALTDSSIAVPESPSEGIPVTYVPARNTVFLSLALGWAEVLGARDIFIGVNAVDYSGYPDCRPEFVESFERMANLATKAGVEGQGFTIRAPLQNLSKSDIVKAGIALGVDYALTVSCYQADDQGRACGKCDSCRLRAEGFTASGMSDPTRYF.

12–22 (LSGGLDSATVV) provides a ligand contact to ATP. 4 residues coordinate Zn(2+): Cys191, Cys201, Cys204, and Cys207.

It belongs to the QueC family. Zn(2+) serves as cofactor.

It carries out the reaction 7-carboxy-7-deazaguanine + NH4(+) + ATP = 7-cyano-7-deazaguanine + ADP + phosphate + H2O + H(+). It functions in the pathway purine metabolism; 7-cyano-7-deazaguanine biosynthesis. Its function is as follows. Catalyzes the ATP-dependent conversion of 7-carboxy-7-deazaguanine (CDG) to 7-cyano-7-deazaguanine (preQ(0)). The sequence is that of 7-cyano-7-deazaguanine synthase from Pseudomonas syringae pv. tomato (strain ATCC BAA-871 / DC3000).